Reading from the N-terminus, the 105-residue chain is Large ribosomal subunit protein eL30 (105 aa).

It belongs to the eukaryotic ribosomal protein eL30 family.

In Trypanosoma brucei brucei, this protein is Large ribosomal subunit protein eL30 (RPL30).